A 313-amino-acid polypeptide reads, in one-letter code: Postacrosomal sheath WW domain-binding protein (313 aa).

The GRAM domain occupies 8–87 (TESRRGALIP…GLMSDCTIEQ (80 aa)). Repeat copies occupy residues 179 to 185 (YGPPPPG), 193 to 199 (YGTPPEG), 207 to 213 (YGAPPMG), 214 to 220 (YGAPPVG), 221 to 227 (YGVPPGG), 228 to 234 (YGVPPGG), 235 to 241 (YGVPPGG), 242 to 248 (YGAPPGG), 249 to 255 (YGVPPGG), 256 to 262 (YGAPPGG), 263 to 269 (YGAPPAG), and 270 to 276 (YGAPPAG). The 12 X 7 AA tandem repeat of Y-G-X-P-P-X-G stretch occupies residues 179–276 (YGPPPPGYTV…PAGYGAPPAG (98 aa)). The PPxY motif 1 motif lies at 183–186 (PPGY). Residues 254-264 (GGYGAPPGGYG) show a composition bias toward gly residues. The tract at residues 254 to 313 (GGYGAPPGGYGAPPAGYGAPPAGNEALPPAYEAPSAGNTAASHRSMTAQQETSLPTTSSS) is disordered. Residues 265-276 (APPAGYGAPPAG) are compositionally biased toward low complexity. Positions 281-284 (PPAY) match the PPxY motif 2 motif. Over residues 289-313 (AGNTAASHRSMTAQQETSLPTTSSS) the composition is skewed to polar residues.

As to expression, expressed in testis.

May play a role in meiotic resumption and pronuclear formation, mediated by a WW domain-signaling pathway during fertilization. The polypeptide is Postacrosomal sheath WW domain-binding protein (WBP2NL) (Bos taurus (Bovine)).